A 634-amino-acid polypeptide reads, in one-letter code: Probable potassium transport system protein Kup (634 aa).

12 helical membrane passes run Ala19–Leu39, Val62–Val82, Phe113–Pro133, Gly150–Gln170, Ile177–Val197, Ile225–Ala245, Trp259–Leu279, Leu291–Ile311, Ile349–Phe369, Tyr379–Trp399, Leu406–Ala426, and Val431–Thr451.

The protein belongs to the HAK/KUP transporter (TC 2.A.72) family.

Its subcellular location is the cell inner membrane. The enzyme catalyses K(+)(in) + H(+)(in) = K(+)(out) + H(+)(out). Transport of potassium into the cell. Likely operates as a K(+):H(+) symporter. This Pseudomonas aeruginosa (strain LESB58) protein is Probable potassium transport system protein Kup.